The sequence spans 181 residues: Cytochrome c-type biogenesis protein CcmE (181 aa).

The Cytoplasmic portion of the chain corresponds to 1 to 8 (MNPRRKSR). Residues 9-29 (LKVVVLIMFSVAVAAGLTLYA) form a helical; Signal-anchor for type II membrane protein membrane-spanning segment. The Periplasmic portion of the chain corresponds to 30–181 (LSQNIDLFYT…TFNTLQGESK (152 aa)). The heme site is built by histidine 131 and tyrosine 135.

Belongs to the CcmE/CycJ family.

It localises to the cell inner membrane. Heme chaperone required for the biogenesis of c-type cytochromes. Transiently binds heme delivered by CcmC and transfers the heme to apo-cytochromes in a process facilitated by CcmF and CcmH. This is Cytochrome c-type biogenesis protein CcmE from Haemophilus ducreyi (strain 35000HP / ATCC 700724).